Reading from the N-terminus, the 630-residue chain is Pro-interleukin-16 (630 aa).

Disordered stretches follow at residues 30-268 (ENPG…FPLT) and 316-343 (PKEG…ASDT). Residues 129–143 (IRASSSSSIKQRISS) show a composition bias toward low complexity. At serine 220 the chain carries Phosphoserine. Positions 321–343 (SPTSSSNEDSAANGSAETSASDT) are enriched in polar residues. Positions 404 to 500 (KQLDSIHVTI…IVTRKLTAES (97 aa)) are interaction with PPP1R12A, PPP1R12B and PPP1R12C. 2 consecutive PDZ domains span residues 410-495 (HVTI…VTRK) and 532-617 (TVTL…IRRK).

Homotetramer. Pro-interleukin-16 interacts (via PDZ 2 domain) with PPP1R12A, PPP1R12B and PPP1R12C. Pro-interleukin-16 interacts with GRIN2A. Pro-interleukin-16 interacts with GABPB1. Pro-interleukin-16 interacts (via PDZ 3 domain) with HDAC3.

Its subcellular location is the secreted. The protein resides in the cytoplasm. The protein localises to the nucleus. Its function is as follows. Interleukin-16 stimulates a migratory response in CD4+ lymphocytes, monocytes, and eosinophils. Primes CD4+ T-cells for IL-2 and IL-15 responsiveness. Also induces T-lymphocyte expression of interleukin 2 receptor. Ligand for CD4. Pro-interleukin-16 is involved in cell cycle progression in T-cells. Appears to be involved in transcriptional regulation of SKP2 and is probably part of a transcriptional repression complex on the core promoter of the SKP2 gene. May act as a scaffold for GABPB1 (the DNA-binding subunit the GABP transcription factor complex) and HDAC3 thus maintaining transcriptional repression and blocking cell cycle progression in resting T-cells. This is Pro-interleukin-16 (IL16) from Macaca mulatta (Rhesus macaque).